Consider the following 80-residue polypeptide: MSPKVQALIFIVGLITLLAAHAQEELSDNIESERGCSGAYKRCSSSQRCCEGRPCVCSAINSNCKCRKTYTELFKEYFEK.

The N-terminal stretch at 1–22 (MSPKVQALIFIVGLITLLAAHA) is a signal peptide. Residues 23–34 (QEELSDNIESER) constitute a propeptide that is removed on maturation. Cystine bridges form between cysteine 36-cysteine 50, cysteine 43-cysteine 55, cysteine 49-cysteine 66, and cysteine 57-cysteine 64.

Belongs to the neurotoxin 02 (plectoxin) family. 05 (U19-lycotoxin) subfamily. As to expression, expressed by the venom gland.

It localises to the secreted. This chain is U19-lycotoxin-Ls1a, found in Lycosa singoriensis (Wolf spider).